The sequence spans 389 residues: PqqA peptide cyclase (389 aa).

The region spanning 20 to 235 (VGLPLWLLAE…TNEYRARLEA (216 aa)) is the Radical SAM core domain. [4Fe-4S] cluster is bound by residues Cys-34, Cys-38, and Cys-41.

Belongs to the radical SAM superfamily. PqqE family. As to quaternary structure, interacts with PqqD. The interaction is necessary for activity of PqqE. It depends on [4Fe-4S] cluster as a cofactor.

The enzyme catalyses [PQQ precursor protein] + S-adenosyl-L-methionine = E-Y cross-linked-[PQQ precursor protein] + 5'-deoxyadenosine + L-methionine + H(+). It functions in the pathway cofactor biosynthesis; pyrroloquinoline quinone biosynthesis. Functionally, catalyzes the cross-linking of a glutamate residue and a tyrosine residue in the PqqA protein as part of the biosynthesis of pyrroloquinoline quinone (PQQ). The chain is PqqA peptide cyclase from Pseudomonas fluorescens (strain ATCC BAA-477 / NRRL B-23932 / Pf-5).